An 858-amino-acid polypeptide reads, in one-letter code: Volume-regulated anion channel subunit LRRC8D (858 aa).

Residues 1–22 (MFTLAEVASLNDIQPTYRILKP) are Cytoplasmic-facing. The chain crosses the membrane as a helical span at residues 23 to 48 (WWDVFMDYLAVVMLMVAIFAGTMQLT). The Extracellular portion of the chain corresponds to 49–163 (KDQVVCLPVL…YHLALPWYSK (115 aa)). C54 and C354 form a disulfide bridge. Residues 164–182 (YFPYLALIHTIILMVSSNF) traverse the membrane as a helical segment. Residues 183–308 (WFKYPKTCSK…EDSDLIYKLY (126 aa)) are Cytoplasmic-facing. Residues 221–251 (SEENKQRITGAQTLPKHVSTSSDEGSPSAST) form a disordered region. Positions 227–251 (RITGAQTLPKHVSTSSDEGSPSAST) are enriched in polar residues. S241, S242, and S246 each carry phosphoserine. The helical transmembrane segment at 309–328 (VVQTVIKTAKFIFILCYTAN) threads the bilayer. Topologically, residues 329-360 (FVNAISFEHVCKPKVEHLIGYEVFECTHNMAY) are extracellular. The chain crosses the membrane as a helical span at residues 361–386 (MLKKLLISYISIICVYGFICLYTLFW). The Cytoplasmic segment spans residues 387–858 (LFRIPLKEYS…DINIPFANGI (472 aa)). LRR repeat units lie at residues 514–534 (NLQELHLCHCPAKVEQTAFSF), 538–559 (HLRCLHVKFTDVAEIPAWVYLL), 561–582 (NLRELYLIGNLNSENNKMIGLE), 589–609 (HLKILHVKSNLTKVPSNITDV), 612–632 (HLTKLVIHNDGTKLLVLNSLK), 636–657 (NVAELELQNCELERIPHAIFSL), 659–680 (NLQELDLKSNNIRTIEEIISFQ), 684–705 (RLTCLKLWHNKIVTIPPSITHV), 707–728 (NLESLYFSNNKLESLPVAVFSL), 730–751 (KLRCLDVSYNNISMIPIEIGLL), 753–774 (NLQHLHITGNKVDILPKQLFKC), 776–797 (KLRTLNLGQNCITSLPEKVGQL), and 799–820 (QLTQLELKGNCLDRLPAQLGQC).

It belongs to the LRRC8 family. In terms of assembly, heterohexamer; oligomerizes with other LRRC8 proteins (LRRC8A, LRRC8B, LRRC8C and/or LRRC8E) to form a heterohexamer. In vivo, the subunit composition may depend primarily on expression levels, and heterooligomeric channels containing various proportions of the different LRRC8 proteins may coexist.

It is found in the cell membrane. Its subcellular location is the endoplasmic reticulum membrane. It carries out the reaction chloride(in) = chloride(out). The enzyme catalyses iodide(out) = iodide(in). The catalysed reaction is taurine(out) = taurine(in). Non-essential component of the volume-regulated anion channel (VRAC, also named VSOAC channel), an anion channel required to maintain a constant cell volume in response to extracellular or intracellular osmotic changes. The VRAC channel conducts iodide better than chloride and can also conduct organic osmolytes like taurine. Plays a redundant role in the efflux of amino acids, such as aspartate, in response to osmotic stress. LRRC8A and LRRC8D are required for the uptake of the drug cisplatin. Channel activity requires LRRC8A plus at least one other family member (LRRC8B, LRRC8C, LRRC8D or LRRC8E); channel characteristics depend on the precise subunit composition. Also acts as a regulator of glucose-sensing in pancreatic beta cells: VRAC currents, generated in response to hypotonicity- or glucose-induced beta cell swelling, depolarize cells, thereby causing electrical excitation, leading to increase glucose sensitivity and insulin secretion. VRAC channels containing LRRC8D inhibit transport of immunoreactive cyclic dinucleotide GMP-AMP (2'-3'-cGAMP), an immune messenger produced in response to DNA virus in the cytosol. Mediates the import of the antibiotic blasticidin-S into the cell. In Homo sapiens (Human), this protein is Volume-regulated anion channel subunit LRRC8D.